The primary structure comprises 440 residues: MSEFSQTVPELVAWARKNDFSISLPVDRLSFLLAVATLNGERLDGEMSEGELVDAFRHVSDAFEQTSETIGVRANNAINDMVRQRLLNRFTSEQAEGNAIYRLTPLGIGITDYYIRQREFSTLRLSMQLSIVAGELKRAADAAEEGGDEFHWHRNVYAPLKYSVAEIFDSIDLTQRLMDEQQQQVKDDIAQLLNKDWRAAISSCELLLSETSGTLRELQDTLEAAGDKLQANLLRIQDATMTHDDLHFVDRLVFDLQSKLDRIISWGQQSIDLWIGYDRHVHKFIRTAIDMDKNRVFAQRLRQSVQTYFDEPWALTYANADRLLDMRDEEMALRDEEVTGELPEDLEYEEFNKIREQLAAIIEEQLAVYKTRQVPLDLGLVVREYLSQYPRARHFDVARIVIDQAVRLGVAQADFTGLPAKWQPINDYGAKVQAHVIDKY.

Residues 208–236 form a leucine-zipper region; the sequence is LSETSGTLRELQDTLEAAGDKLQANLLRI.

It belongs to the MukF family. In terms of assembly, interacts, and probably forms a ternary complex, with MukE and MukB via its C-terminal region. The complex formation is stimulated by calcium or magnesium. It is required for an interaction between MukE and MukB.

Its subcellular location is the cytoplasm. It is found in the nucleoid. Involved in chromosome condensation, segregation and cell cycle progression. May participate in facilitating chromosome segregation by condensation DNA from both sides of a centrally located replisome during cell division. Not required for mini-F plasmid partitioning. Probably acts via its interaction with MukB and MukE. Overexpression results in anucleate cells. It has a calcium binding activity. This Escherichia coli O9:H4 (strain HS) protein is Chromosome partition protein MukF.